Consider the following 175-residue polypeptide: Vitamin K epoxide reductase complex subunit 1-like protein 1 (175 aa).

At methionine 1 to arginine 12 the chain is on the cytoplasmic side. Residues tryptophan 13–valine 35 form a helical membrane-spanning segment. At glutamate 36–asparagine 86 the chain is on the lumenal side. A disulfide bond links cysteine 49 and cysteine 57. Asparagine 86 provides a ligand contact to (S)-warfarin. The helical transmembrane segment at serine 87 to glycine 101 threads the bilayer. Topologically, residues methionine 102 to alanine 106 are cytoplasmic. A helical transmembrane segment spans residues methionine 107 to leucine 134. Topologically, residues lysine 135–leucine 137 are lumenal. Cysteines 138 and 141 form a disulfide. A helical membrane pass occupies residues cysteine 138 to leucine 159. 2 residues coordinate phylloquinone: cysteine 141 and tyrosine 145. Residue tyrosine 145 coordinates (S)-warfarin. Topologically, residues valine 160 to aspartate 175 are cytoplasmic.

It belongs to the VKOR family.

It is found in the endoplasmic reticulum membrane. The enzyme catalyses phylloquinone + [protein]-disulfide + H2O = 2,3-epoxyphylloquinone + [protein]-dithiol. It carries out the reaction phylloquinol + [protein]-disulfide = phylloquinone + [protein]-dithiol. With respect to regulation, inhibited by warfarin (coumadin). Warfarin locks VKORC1 in both redox states into the closed conformation. Involved in vitamin K metabolism. Can reduce inactive vitamin K 2,3-epoxide to active vitamin K, and may contribute to vitamin K-mediated protection against oxidative stress. Plays a role in vitamin K-dependent gamma-carboxylation of Glu residues in target proteins. This Takifugu rubripes (Japanese pufferfish) protein is Vitamin K epoxide reductase complex subunit 1-like protein 1 (vkorc1l1).